The following is a 356-amino-acid chain: MNWDDTTDATADERLVGASADREDQAVEAALRPKDLDEFIGQEKVREQLDLVLRAARARGATSDHVLLSGAPGLGKTTLSMIIAAEMGAPIRITSGPAIQHAGDLAAILSSLQEGEVLFLDEIHRMSRPAEEMLYMAMEDFRVDVIVGKGPGATAIPLELPPFTLVGATTRAGLLPPPLRDRFGFTAHMEFYEPHELERVIHRSAGLLDVEIDSRGAAEIAGRSRGTPRIANRLLRRVRDYAQVKADGVITREIAAAALKVYEVDARGLDRLDRGVLEALLKLFGGGPVGLSTLAVAVGEERETVEEVAEPFLVREGLLARTPRGRVATPAAWAHLGLTPPPRATGGNGQGDLFGA.

Residues 4-192 form a large ATPase domain (RuvB-L) region; that stretch reads DDTTDATADE…FGFTAHMEFY (189 aa). ATP contacts are provided by residues Leu-31, Arg-32, Gly-73, Lys-76, Thr-77, Thr-78, 139–141, Arg-182, Tyr-192, and Arg-229; that span reads EDF. Mg(2+) is bound at residue Thr-77. The segment at 193-263 is small ATPAse domain (RuvB-S); the sequence is EPHELERVIH…IAAAALKVYE (71 aa). A head domain (RuvB-H) region spans residues 266–356; the sequence is ARGLDRLDRG…GNGQGDLFGA (91 aa). Arg-302, Arg-321, and Arg-326 together coordinate DNA.

Belongs to the RuvB family. As to quaternary structure, homohexamer. Forms an RuvA(8)-RuvB(12)-Holliday junction (HJ) complex. HJ DNA is sandwiched between 2 RuvA tetramers; dsDNA enters through RuvA and exits via RuvB. An RuvB hexamer assembles on each DNA strand where it exits the tetramer. Each RuvB hexamer is contacted by two RuvA subunits (via domain III) on 2 adjacent RuvB subunits; this complex drives branch migration. In the full resolvosome a probable DNA-RuvA(4)-RuvB(12)-RuvC(2) complex forms which resolves the HJ.

The protein resides in the cytoplasm. It catalyses the reaction ATP + H2O = ADP + phosphate + H(+). Functionally, the RuvA-RuvB-RuvC complex processes Holliday junction (HJ) DNA during genetic recombination and DNA repair, while the RuvA-RuvB complex plays an important role in the rescue of blocked DNA replication forks via replication fork reversal (RFR). RuvA specifically binds to HJ cruciform DNA, conferring on it an open structure. The RuvB hexamer acts as an ATP-dependent pump, pulling dsDNA into and through the RuvAB complex. RuvB forms 2 homohexamers on either side of HJ DNA bound by 1 or 2 RuvA tetramers; 4 subunits per hexamer contact DNA at a time. Coordinated motions by a converter formed by DNA-disengaged RuvB subunits stimulates ATP hydrolysis and nucleotide exchange. Immobilization of the converter enables RuvB to convert the ATP-contained energy into a lever motion, pulling 2 nucleotides of DNA out of the RuvA tetramer per ATP hydrolyzed, thus driving DNA branch migration. The RuvB motors rotate together with the DNA substrate, which together with the progressing nucleotide cycle form the mechanistic basis for DNA recombination by continuous HJ branch migration. Branch migration allows RuvC to scan DNA until it finds its consensus sequence, where it cleaves and resolves cruciform DNA. This Streptomyces avermitilis (strain ATCC 31267 / DSM 46492 / JCM 5070 / NBRC 14893 / NCIMB 12804 / NRRL 8165 / MA-4680) protein is Holliday junction branch migration complex subunit RuvB.